Reading from the N-terminus, the 294-residue chain is Aspartate carbamoyltransferase catalytic subunit (294 aa).

R49 and T50 together coordinate carbamoyl phosphate. Position 77 (K77) interacts with L-aspartate. Carbamoyl phosphate is bound by residues R99, H127, and Q130. L-aspartate is bound by residues R161 and R211. Residues G250 and P251 each coordinate carbamoyl phosphate.

This sequence belongs to the aspartate/ornithine carbamoyltransferase superfamily. ATCase family. Heterododecamer (2C3:3R2) of six catalytic PyrB chains organized as two trimers (C3), and six regulatory PyrI chains organized as three dimers (R2).

The enzyme catalyses carbamoyl phosphate + L-aspartate = N-carbamoyl-L-aspartate + phosphate + H(+). The protein operates within pyrimidine metabolism; UMP biosynthesis via de novo pathway; (S)-dihydroorotate from bicarbonate: step 2/3. Functionally, catalyzes the condensation of carbamoyl phosphate and aspartate to form carbamoyl aspartate and inorganic phosphate, the committed step in the de novo pyrimidine nucleotide biosynthesis pathway. This Sulfurovum sp. (strain NBC37-1) protein is Aspartate carbamoyltransferase catalytic subunit.